We begin with the raw amino-acid sequence, 166 residues long: MASSGFSGDETAPFFGFLGAAAALVFSCMGAAYGTAKSGVGVASMGVMRPELVMKSIVPVVMAGVLGIYGLIIAVIISTGINPKAKSYYLFDGYAHLSSGLACGLAGLSAGMAIGIVGDAGVRANAQQPKLFVGMILILIFAEALALYGLIVGIILSSRAGQSRAE.

Residues 1 to 13 are Lumenal-facing; sequence MASSGFSGDETAP. Residues 14-34 traverse the membrane as a helical segment; it reads FFGFLGAAAALVFSCMGAAYG. The Cytoplasmic portion of the chain corresponds to 35 to 56; that stretch reads TAKSGVGVASMGVMRPELVMKS. The helical transmembrane segment at 57-77 threads the bilayer; that stretch reads IVPVVMAGVLGIYGLIIAVII. The Lumenal portion of the chain corresponds to 78 to 96; it reads STGINPKAKSYYLFDGYAH. A helical transmembrane segment spans residues 97–118; sequence LSSGLACGLAGLSAGMAIGIVG. Topologically, residues 119-130 are cytoplasmic; that stretch reads DAGVRANAQQPK. The chain crosses the membrane as a helical span at residues 131-156; the sequence is LFVGMILILIFAEALALYGLIVGIIL. Residues 157-166 lie on the Lumenal side of the membrane; sequence SSRAGQSRAE.

The protein belongs to the V-ATPase proteolipid subunit family. V-ATPase is a heteromultimeric enzyme composed of a peripheral catalytic V1 complex (components A to H) attached to an integral membrane V0 proton pore complex (components: a, c, c'', d and e). The proteolipid components c and c'' are present as a hexameric ring that forms the proton-conducting pore. Interacts with APD2.

Its subcellular location is the vacuole membrane. In terms of biological role, proton-conducting pore forming subunit of the membrane integral V0 complex of vacuolar ATPase. V-ATPase is responsible for acidifying a variety of intracellular compartments in eukaryotic cells. The sequence is that of V-type proton ATPase subunit c4 (VHA-c4) from Arabidopsis thaliana (Mouse-ear cress).